The primary structure comprises 388 residues: 4-hydroxy-3-methylbut-2-en-1-yl diphosphate synthase (flavodoxin) (388 aa).

The [4Fe-4S] cluster site is built by cysteine 281, cysteine 284, cysteine 316, and glutamate 323.

The protein belongs to the IspG family. [4Fe-4S] cluster serves as cofactor.

It catalyses the reaction (2E)-4-hydroxy-3-methylbut-2-enyl diphosphate + oxidized [flavodoxin] + H2O + 2 H(+) = 2-C-methyl-D-erythritol 2,4-cyclic diphosphate + reduced [flavodoxin]. Its pathway is isoprenoid biosynthesis; isopentenyl diphosphate biosynthesis via DXP pathway; isopentenyl diphosphate from 1-deoxy-D-xylulose 5-phosphate: step 5/6. In terms of biological role, converts 2C-methyl-D-erythritol 2,4-cyclodiphosphate (ME-2,4cPP) into 1-hydroxy-2-methyl-2-(E)-butenyl 4-diphosphate. The sequence is that of 4-hydroxy-3-methylbut-2-en-1-yl diphosphate synthase (flavodoxin) from Arthrobacter sp. (strain FB24).